Here is a 123-residue protein sequence, read N- to C-terminus: MVVQDPLLCDLPIQVTLEEVNSQIALEYGQAMTVRVCKMDGEVMPVVVVQNATVLDLKKAIQRYVQLKQEREGGVQHISWSYVWRTYHLTSAGEKLTEDRKKLRDYGIRNRDEVSFIKKLRQK.

Residues 32–123 form the Ubiquitin-like domain; the sequence is MTVRVCKMDG…VSFIKKLRQK (92 aa).

As to quaternary structure, component of the U11/U12 snRNPs that are part of the U12-type spliceosome.

Its subcellular location is the nucleus. The polypeptide is U11/U12 small nuclear ribonucleoprotein 25 kDa protein (Snrnp25) (Mus musculus (Mouse)).